A 365-amino-acid chain; its full sequence is DNA replication and repair protein RecF (365 aa).

30–37 is a binding site for ATP; sequence GANGQGKT.

The protein belongs to the RecF family.

The protein localises to the cytoplasm. Functionally, the RecF protein is involved in DNA metabolism; it is required for DNA replication and normal SOS inducibility. RecF binds preferentially to single-stranded, linear DNA. It also seems to bind ATP. This Geobacter metallireducens (strain ATCC 53774 / DSM 7210 / GS-15) protein is DNA replication and repair protein RecF.